The chain runs to 166 residues: Regulatory protein RecX (166 aa).

This sequence belongs to the RecX family.

Its subcellular location is the cytoplasm. Its function is as follows. Modulates RecA activity. This Escherichia coli (strain SE11) protein is Regulatory protein RecX.